The primary structure comprises 364 residues: MKPLAYYEDQLLKDEKSFLKVTEIERLLSYAAYLLPAEFRDDQLKSQTITSILLLLHQFHTGLLFRKIAELPKTEQAILKSERTQYLEYFRKKNPSFEKVSELLYFLNISTFPIELVISKYNPSRQYDSVLFLESVKFLLRVHIMWTTGGDLPLSNPVLQRDFNVKTFIHLHKKYSNSGSAVVLKNSKKVVPRLNTVNSSLDFLQNRTPRLSSILPDEIFTKRLPNLRIFSNFIKVCRPLIYMLFMWHWKRKQKSSSLKVRPWGPWIVAFVFEVISQLIDRRCESATSSRQGFGLERRTNQSQFQHFVVWAFTQGRFYDEFTKHWINRSLSWVNSIPVFGKYLLLSVEERQKSLENYISSVRNY.

Ser-200 carries the post-translational modification Phosphoserine.

The protein belongs to the peroxin-16 family.

Its subcellular location is the peroxisome membrane. In terms of biological role, involved in the biogenesis of peroxisomes. The chain is Peroxisomal membrane protein PEX16 (pex16) from Schizosaccharomyces pombe (strain 972 / ATCC 24843) (Fission yeast).